A 557-amino-acid chain; its full sequence is Glucose-6-phosphate isomerase (557 aa).

Residue Glu361 is the Proton donor of the active site. Active-site residues include His392 and Lys520.

This sequence belongs to the GPI family.

The protein localises to the cytoplasm. It carries out the reaction alpha-D-glucose 6-phosphate = beta-D-fructose 6-phosphate. Its pathway is carbohydrate biosynthesis; gluconeogenesis. It participates in carbohydrate degradation; glycolysis; D-glyceraldehyde 3-phosphate and glycerone phosphate from D-glucose: step 2/4. In terms of biological role, catalyzes the reversible isomerization of glucose-6-phosphate to fructose-6-phosphate. This chain is Glucose-6-phosphate isomerase, found in Acinetobacter baylyi (strain ATCC 33305 / BD413 / ADP1).